A 69-amino-acid polypeptide reads, in one-letter code: Brevinin-1CG1 (69 aa).

Residues 1-22 form the signal peptide; sequence MFTMKKSLLLLFFLGTINLSLC. The propeptide at 23–43 is removed in mature form; sequence EQERNAEEERRDDDEMDVEVE. An intrachain disulfide couples cysteine 63 to cysteine 69.

Expressed by the skin glands.

It is found in the secreted. Functionally, antimicrobial peptide. Active against Gram-positive bacteria R.rhodochrous X15 and B.licheniformis X39 and against Gram-negative bacterium E.coli ATCC 25922. Has antifungal activity against a slime mold isolate. Has weak hemolytic activity against human erythrocytes. The sequence is that of Brevinin-1CG1 from Amolops chunganensis (Chungan torrent frog).